We begin with the raw amino-acid sequence, 104 residues long: L-rhamnose mutarotase (104 aa).

A substrate-binding site is contributed by Tyr18. Catalysis depends on His22, which acts as the Proton donor. Residues Tyr41 and 76-77 each bind substrate; that span reads WW.

This sequence belongs to the rhamnose mutarotase family. In terms of assembly, homodimer.

It localises to the cytoplasm. The enzyme catalyses alpha-L-rhamnose = beta-L-rhamnose. It functions in the pathway carbohydrate metabolism; L-rhamnose metabolism. Its function is as follows. Involved in the anomeric conversion of L-rhamnose. This Escherichia coli O127:H6 (strain E2348/69 / EPEC) protein is L-rhamnose mutarotase.